The following is a 179-amino-acid chain: Replication restart protein DnaT (179 aa).

Positions 156–179 (GGLPKRDVNTVSEPDSQIPPGFRG) are disordered.

It belongs to the DnaT family. Homooligomerizes. Interacts with PriB. Component of the replication restart primosome. Primosome assembly occurs via a 'hand-off' mechanism. PriA binds to replication forks, subsequently PriB then DnaT bind; DnaT then displaces ssDNA to generate the helicase loading substrate.

Functionally, involved in the restart of stalled replication forks, which reloads the replicative helicase on sites other than the origin of replication. Can function in multiple replication restart pathways. Displaces ssDNA from a PriB-ssDNA complex. Probably forms a spiral filament on ssDNA. In Escherichia coli O7:K1 (strain IAI39 / ExPEC), this protein is Replication restart protein DnaT.